We begin with the raw amino-acid sequence, 90 residues long: Hemoglobin subunit alpha-1 (90 aa).

In terms of domain architecture, Globin spans valine 1–lysine 90.

This sequence belongs to the globin family. In terms of assembly, heterotetramer of two alpha chains and two beta chains. As to expression, red blood cells.

In terms of biological role, involved in oxygen transport from the lung to the various peripheral tissues. The sequence is that of Hemoglobin subunit alpha-1 from Saara hardwickii (Indian spiny-tailed lizard).